The sequence spans 322 residues: Hydroxypyruvate reductase (322 aa).

Residues 160 to 161, aspartate 180, 211 to 212, 238 to 240, and aspartate 264 each bind NAD(+); these read RI, CP, and NSR. Arginine 240 is a catalytic residue. Glutamate 269 is an active-site residue. The Proton donor role is filled by histidine 288.

This sequence belongs to the D-isomer specific 2-hydroxyacid dehydrogenase family.

It carries out the reaction (R)-glycerate + NAD(+) = 3-hydroxypyruvate + NADH + H(+). Its pathway is carbohydrate metabolism. In terms of biological role, involved in catabolism of D-apiose. Catalyzes the reduction of 3-hydroxypyruvate to glycerate. The chain is Hydroxypyruvate reductase from Blautia hydrogenotrophica (strain DSM 10507 / JCM 14656 / S5a33) (Ruminococcus hydrogenotrophicus).